A 696-amino-acid polypeptide reads, in one-letter code: Polyribonucleotide nucleotidyltransferase (696 aa).

Residues Asp-486 and Asp-492 each coordinate Mg(2+). The KH domain maps to 553–612 (PRIIVRNIPKDRIGELIGPGGKNVRGISELTGAELYIEDDGRVTISGSNQESAEKAAKMV). Positions 622–690 (GKIYEGKVKR…KTGKIDLSRK (69 aa)) constitute an S1 motif domain.

Belongs to the polyribonucleotide nucleotidyltransferase family. It depends on Mg(2+) as a cofactor.

Its subcellular location is the cytoplasm. The enzyme catalyses RNA(n+1) + phosphate = RNA(n) + a ribonucleoside 5'-diphosphate. Functionally, involved in mRNA degradation. Catalyzes the phosphorolysis of single-stranded polyribonucleotides processively in the 3'- to 5'-direction. The sequence is that of Polyribonucleotide nucleotidyltransferase from Leptospira borgpetersenii serovar Hardjo-bovis (strain L550).